Consider the following 103-residue polypeptide: Histone H4 (103 aa).

Over residues 1–14 (MSGRGKGGKGLGKG) the composition is skewed to gly residues. The disordered stretch occupies residues 1–20 (MSGRGKGGKGLGKGGAKRHR). Residues 17–21 (KRHRK) mediate DNA binding.

It belongs to the histone H4 family. In terms of assembly, the nucleosome is a histone octamer containing two molecules each of H2A, H2B, H3 and H4 assembled in one H3-H4 heterotetramer and two H2A-H2B heterodimers. The octamer wraps approximately 147 bp of DNA.

The protein resides in the nucleus. It localises to the chromosome. Core component of nucleosome. Nucleosomes wrap and compact DNA into chromatin, limiting DNA accessibility to the cellular machineries which require DNA as a template. Histones thereby play a central role in transcription regulation, DNA repair, DNA replication and chromosomal stability. DNA accessibility is regulated via a complex set of post-translational modifications of histones, also called histone code, and nucleosome remodeling. The chain is Histone H4 (H4-I) from Chlamydomonas reinhardtii (Chlamydomonas smithii).